A 184-amino-acid chain; its full sequence is Ribosome-recycling factor (184 aa).

Belongs to the RRF family.

The protein localises to the cytoplasm. Its function is as follows. Responsible for the release of ribosomes from messenger RNA at the termination of protein biosynthesis. May increase the efficiency of translation by recycling ribosomes from one round of translation to another. This Fervidobacterium nodosum (strain ATCC 35602 / DSM 5306 / Rt17-B1) protein is Ribosome-recycling factor.